The chain runs to 592 residues: A-type ATP synthase subunit A (592 aa).

236 to 243 (GPFGSGKT) provides a ligand contact to ATP.

Belongs to the ATPase alpha/beta chains family. In terms of assembly, has multiple subunits with at least A(3), B(3), C, D, E, F, H, I and proteolipid K(x).

It is found in the cell membrane. The enzyme catalyses ATP + H2O + 4 H(+)(in) = ADP + phosphate + 5 H(+)(out). Functionally, component of the A-type ATP synthase that produces ATP from ADP in the presence of a proton gradient across the membrane. The A chain is the catalytic subunit. In Methanopyrus kandleri (strain AV19 / DSM 6324 / JCM 9639 / NBRC 100938), this protein is A-type ATP synthase subunit A.